We begin with the raw amino-acid sequence, 211 residues long: ATP-dependent Clp protease proteolytic subunit 2 (211 aa).

Catalysis depends on serine 106, which acts as the Nucleophile. Residue histidine 131 is part of the active site.

The protein belongs to the peptidase S14 family. Fourteen ClpP subunits assemble into 2 heptameric rings which stack back to back to give a disk-like structure with a central cavity, resembling the structure of eukaryotic proteasomes.

It is found in the cytoplasm. It carries out the reaction Hydrolysis of proteins to small peptides in the presence of ATP and magnesium. alpha-casein is the usual test substrate. In the absence of ATP, only oligopeptides shorter than five residues are hydrolyzed (such as succinyl-Leu-Tyr-|-NHMec, and Leu-Tyr-Leu-|-Tyr-Trp, in which cleavage of the -Tyr-|-Leu- and -Tyr-|-Trp bonds also occurs).. Its function is as follows. Cleaves peptides in various proteins in a process that requires ATP hydrolysis. Has a chymotrypsin-like activity. Plays a major role in the degradation of misfolded proteins. This is ATP-dependent Clp protease proteolytic subunit 2 from Bradyrhizobium diazoefficiens (strain JCM 10833 / BCRC 13528 / IAM 13628 / NBRC 14792 / USDA 110).